Consider the following 280-residue polypeptide: 2-dehydro-3-deoxyphosphooctonate aldolase (280 aa).

Belongs to the KdsA family.

The protein resides in the cytoplasm. The enzyme catalyses D-arabinose 5-phosphate + phosphoenolpyruvate + H2O = 3-deoxy-alpha-D-manno-2-octulosonate-8-phosphate + phosphate. Its pathway is carbohydrate biosynthesis; 3-deoxy-D-manno-octulosonate biosynthesis; 3-deoxy-D-manno-octulosonate from D-ribulose 5-phosphate: step 2/3. It participates in bacterial outer membrane biogenesis; lipopolysaccharide biosynthesis. The polypeptide is 2-dehydro-3-deoxyphosphooctonate aldolase (Desulfotalea psychrophila (strain LSv54 / DSM 12343)).